Reading from the N-terminus, the 209-residue chain is Pyroglutamyl-peptidase 1 (209 aa).

Active-site residues include Glu-85, Cys-149, and His-168.

The protein belongs to the peptidase C15 family. Monomer.

It is found in the cytoplasm. The catalysed reaction is Release of an N-terminal pyroglutamyl group from a polypeptide, the second amino acid generally not being Pro.. Its function is as follows. Removes 5-oxoproline from various penultimate amino acid residues except L-proline. This chain is Pyroglutamyl-peptidase 1 (Pgpep1), found in Mus musculus (Mouse).